The sequence spans 234 residues: tRNA (guanine-N(1)-)-methyltransferase (234 aa).

Residues G115 and 135–140 (VGDYIL) contribute to the S-adenosyl-L-methionine site.

It belongs to the RNA methyltransferase TrmD family. Homodimer.

The protein localises to the cytoplasm. It catalyses the reaction guanosine(37) in tRNA + S-adenosyl-L-methionine = N(1)-methylguanosine(37) in tRNA + S-adenosyl-L-homocysteine + H(+). Specifically methylates guanosine-37 in various tRNAs. The sequence is that of tRNA (guanine-N(1)-)-methyltransferase from Rickettsia rickettsii (strain Iowa).